A 775-amino-acid chain; its full sequence is DENN domain-containing protein 1B (775 aa).

The uDENN domain occupies D14–T143. The region spanning G180–K316 is the cDENN domain. The dDENN domain maps to Q318–G395. Positions F398–F402 match the FXDXF motif motif. Y520 carries the post-translational modification Phosphotyrosine. Phosphoserine is present on residues S535, S536, S549, and S552. The Clathrin box motif lies at D566 to L575. 2 disordered regions span residues D635–S654 and H671–T706. The segment covering H639–V651 has biased composition (basic residues). Phosphoserine is present on residues S652 and S653. The span at Q695–T706 shows a compositional bias: basic and acidic residues.

As to quaternary structure, interacts with RAB35. Interacts with clathrin heavy chain/CLTC. Interacts with components of the adapter protein complex 2 (AP-2) AP2A2 and AP2B1. Interacts with CD3E. Post-translationally, phosphorylated on serine and/or threonine, possibly regulating the guanine nucleotide exchange factor (GEF) activity. In terms of tissue distribution, highly expressed in dendritic and natural killer cells and at lower levels in other myeloid lineage cells and in pituitary. Significantly up-regulated in effector memory T-cells as compared with naive T-cells.

The protein resides in the cytoplasm. The protein localises to the cytosol. Its subcellular location is the cytoplasmic vesicle. It is found in the clathrin-coated vesicle. Guanine nucleotide exchange factor (GEF) for RAB35 that acts as a regulator of T-cell receptor (TCR) internalization in TH2 cells. Acts by promoting the exchange of GDP to GTP, converting inactive GDP-bound RAB35 into its active GTP-bound form. Plays a role in clathrin-mediated endocytosis. Controls cytokine production in TH2 lymphocytes by controlling the rate of TCR internalization and routing to endosomes: acts by mediating clathrin-mediated endocytosis of TCR via its interaction with the adapter protein complex 2 (AP-2) and GEF activity. Dysregulation leads to impaired TCR down-modulation and recycling, affecting cytokine production in TH2 cells. The polypeptide is DENN domain-containing protein 1B (Homo sapiens (Human)).